The sequence spans 137 residues: Acidic phospholipase A2 beta-bungarotoxin A6 chain (137 aa).

An N-terminal signal peptide occupies residues 1-9 (AVCVSLLGA). The propeptide occupies 10-17 (ANIPPQHL). Cystine bridges form between C44-C136, C46-C62, C61-C117, C68-C110, C78-C103, and C96-C108. The Ca(2+) site is built by Y45, G47, and G49. Residue H65 is part of the active site. A Ca(2+)-binding site is contributed by D66. D111 is a catalytic residue.

The protein belongs to the phospholipase A2 family. Group I subfamily. D49 sub-subfamily. As to quaternary structure, heterodimer; disulfide-linked. The A chains have phospholipase A2 activity and the B chains show homology with the basic protease inhibitors. Ca(2+) is required as a cofactor. Expressed by the venom gland.

It is found in the secreted. It carries out the reaction a 1,2-diacyl-sn-glycero-3-phosphocholine + H2O = a 1-acyl-sn-glycero-3-phosphocholine + a fatty acid + H(+). In terms of biological role, snake venom phospholipase A2 (PLA2) that inhibits neuromuscular transmission by blocking acetylcholine release from the nerve termini. PLA2 catalyzes the calcium-dependent hydrolysis of the 2-acyl groups in 3-sn-phosphoglycerides. In Bungarus multicinctus (Many-banded krait), this protein is Acidic phospholipase A2 beta-bungarotoxin A6 chain.